The following is a 1581-amino-acid chain: ATP-binding cassette sub-family C member 8 (1581 aa).

At 1-30 the chain is on the extracellular side; sequence MPLAFCGSENHSAAYRVDQGVLNNGCFVDA. C6 and C26 are disulfide-bonded. The N-linked (GlcNAc...) asparagine glycan is linked to N10. Residues 31-47 form a helical membrane-spanning segment; that stretch reads LNVVPHVFLLFITFPIL. The Cytoplasmic segment spans residues 48 to 72; it reads FIGWGSQSSKVHIHHSTWLHFPGHN. A helical membrane pass occupies residues 73-89; it reads LRWILTFMLLFVLVCEI. Topologically, residues 90–106 are extracellular; that stretch reads AEGILSDGVTESHHLHL. The chain crosses the membrane as a helical span at residues 107 to 123; sequence YMPAGMAFMAAVTSVVY. Over 124–136 the chain is Cytoplasmic; that stretch reads YHNIETSNFPKLL. Residues 137–153 form a helical membrane-spanning segment; it reads IALLVYWTLAFITKTIK. Over 154–169 the chain is Extracellular; that stretch reads FVKFLDHAIGFSQLRF. Residues 170–186 form a helical membrane-spanning segment; that stretch reads CLTGLLVILYGMLLLVE. Residues 187-303 are Cytoplasmic-facing; sequence VNVIRVRRYI…AFGRRLVLSS (117 aa). An ABC transmembrane type-1 1 domain is found at 299 to 602; sequence LVLSSTFRIL…LSSVVRSTVK (304 aa). The helical transmembrane segment at 304–319 threads the bilayer; it reads TFRILADLLGFAGPLC. The Extracellular portion of the chain corresponds to 320-356; that stretch reads IFGIVDHLGKENDVFQPKTQFLGVYFVSSQEFLANAY. A helical transmembrane segment spans residues 357-372; that stretch reads VLAVLLFLALLLQRTF. At 373-438 the chain is on the cytoplasmic side; the sequence is LQASYYVAIE…MWFFFLCPNL (66 aa). Residues 439 to 454 form a helical membrane-spanning segment; that stretch reads WAMPVQIIVGVILLYY. Residues 455-460 are Extracellular-facing; the sequence is ILGVSA. The helical transmembrane segment at 461 to 473 threads the bilayer; the sequence is LIGAAVIILLAPV. The Cytoplasmic portion of the chain corresponds to 474–541; the sequence is QYFVATKLSQ…SLRAFAIYTS (68 aa). Residues 542 to 557 form a helical membrane-spanning segment; that stretch reads ISIFMNTAIPIAAVLI. Topologically, residues 558 to 576 are extracellular; that stretch reads TFVGHVSFFKEADFSPSVA. A helical membrane pass occupies residues 577–592; it reads FASLSLFHILVTPLFL. The Cytoplasmic segment spans residues 593 to 1012; it reads LSSVVRSTVK…YLSSAGILLL (420 aa). The ABC transporter 1 domain occupies 679-929; it reads VQIMGGYFTW…ECQLFEHWKT (251 aa). Residues W688, G716, S720, and S721 each contribute to the ATP site. Mg(2+) is bound at residue S720. Residue Q774 coordinates Mg(2+). The span at 935–949 shows a compositional bias: basic and acidic residues; the sequence is DQELEKETVTERKAT. Residues 935 to 987 form a disordered region; sequence DQELEKETVTERKATEPPQGLSRAMSSRDGLLQDEEEEEEEAAESEEDDNLSS. Over residues 966-984 the composition is skewed to acidic residues; it reads LQDEEEEEEEAAESEEDDN. An ABC transmembrane type-1 2 domain is found at 1012–1306; it reads LSLLVFSQLL…MVRNLADMEL (295 aa). Residues 1013–1030 form a helical membrane-spanning segment; that stretch reads SLLVFSQLLKHMVLVAID. The Extracellular portion of the chain corresponds to 1031–1066; it reads YWLAKWTDSALTLTPAARNCSLSQECTLDQTVYAMV. N1049 carries an N-linked (GlcNAc...) asparagine glycan. Residues 1067 to 1083 traverse the membrane as a helical segment; it reads FTVLCSLGIVLCLVTSV. Over 1084 to 1142 the chain is Cytoplasmic; the sequence is TVEWTGLKVAKRLHRSLLNRIILAPMRFFETTPLGSILNRFSSDCNTIDQHIPSTLECL. Residues 1143-1160 form a helical membrane-spanning segment; that stretch reads SRSTLLCVSALAVISYVT. A topological domain (extracellular) is located at residue P1161. Residues 1162–1174 form a helical membrane-spanning segment; it reads VFLVALLPLAIVC. The Cytoplasmic portion of the chain corresponds to 1175 to 1248; the sequence is YFIQKYFRVA…FLTAANRWLE (74 aa). A helical transmembrane segment spans residues 1249–1264; that stretch reads VRMEYIGACVVLIAAV. Residues 1265–1280 are Extracellular-facing; the sequence is TSISNSLHRELSAGLV. Residues 1281 to 1296 traverse the membrane as a helical segment; that stretch reads GLGLTYALMVSNYLNW. Topologically, residues 1297–1581 are cytoplasmic; it reads MVRNLADMEL…VFASFVRADK (285 aa). The ABC transporter 2 domain occupies 1344–1578; the sequence is IQIQNLSVRY…KDSVFASFVR (235 aa). ADP-binding residues include T1380, G1381, G1383, K1384, S1385, and S1386. S1482 is an ATP binding site.

It belongs to the ABC transporter superfamily. ABCC family. Conjugate transporter (TC 3.A.1.208) subfamily. Forms an heterooctamer with KCNJ11; four ABCC8/SUR1 molecules interact with one KCNJ11 homotetramer.

It localises to the cell membrane. Its activity is regulated as follows. KATP channels are regulated by cytoplasmic ATP/ADP ratios; ATP inhibits the channel by closing the pore, while ADP activates the channel. Activated by phosphatidylinositol 4,5-biphosphate (PtdIns(4,5)P2). Regulator subunit of pancreatic ATP-sensitive potassium channel (KATP), playing a major role in the regulation of insulin release. In pancreatic cells, it forms KATP channels with KCNJ11; KCNJ11 forms the channel pore while ABCC8 is required for activation and regulation. This is ATP-binding cassette sub-family C member 8 (ABCC8) from Homo sapiens (Human).